The primary structure comprises 424 residues: Tol-Pal system protein TolB (424 aa).

Positions 1-24 (MNKARAIARWISFLLLIAAGQVCA) are cleaved as a signal peptide.

The protein belongs to the TolB family. The Tol-Pal system is composed of five core proteins: the inner membrane proteins TolA, TolQ and TolR, the periplasmic protein TolB and the outer membrane protein Pal. They form a network linking the inner and outer membranes and the peptidoglycan layer.

Its subcellular location is the periplasm. Its function is as follows. Part of the Tol-Pal system, which plays a role in outer membrane invagination during cell division and is important for maintaining outer membrane integrity. This Methylococcus capsulatus (strain ATCC 33009 / NCIMB 11132 / Bath) protein is Tol-Pal system protein TolB.